The sequence spans 235 residues: Orotidine 5'-phosphate decarboxylase (235 aa).

Residues D12, K34, 61 to 70 (DMKLLDIDNT), T116, R177, Q186, G206, and R207 each bind substrate. The active-site Proton donor is the K63.

Belongs to the OMP decarboxylase family. Type 1 subfamily. In terms of assembly, homodimer.

It carries out the reaction orotidine 5'-phosphate + H(+) = UMP + CO2. It participates in pyrimidine metabolism; UMP biosynthesis via de novo pathway; UMP from orotate: step 2/2. Functionally, catalyzes the decarboxylation of orotidine 5'-monophosphate (OMP) to uridine 5'-monophosphate (UMP). In Rhizobium etli (strain ATCC 51251 / DSM 11541 / JCM 21823 / NBRC 15573 / CFN 42), this protein is Orotidine 5'-phosphate decarboxylase.